We begin with the raw amino-acid sequence, 42 residues long: Photosystem I reaction center subunit IX (42 aa).

A helical transmembrane segment spans residues tyrosine 8 to isoleucine 28.

The protein belongs to the PsaJ family.

The protein resides in the plastid. The protein localises to the chloroplast thylakoid membrane. May help in the organization of the PsaE and PsaF subunits. This chain is Photosystem I reaction center subunit IX, found in Guillardia theta (Cryptophyte).